Here is a 249-residue protein sequence, read N- to C-terminus: Acetylglutamate kinase (249 aa).

Substrate-binding positions include 36–37, Arg-58, and Asn-147; that span reads GG.

This sequence belongs to the acetylglutamate kinase family. ArgB subfamily.

Its subcellular location is the cytoplasm. The catalysed reaction is N-acetyl-L-glutamate + ATP = N-acetyl-L-glutamyl 5-phosphate + ADP. It functions in the pathway amino-acid biosynthesis; L-arginine biosynthesis; N(2)-acetyl-L-ornithine from L-glutamate: step 2/4. Its function is as follows. Catalyzes the ATP-dependent phosphorylation of N-acetyl-L-glutamate. The chain is Acetylglutamate kinase from Thermus thermophilus (strain ATCC 27634 / DSM 579 / HB8).